The sequence spans 231 residues: Large ribosomal subunit protein uL1 (231 aa).

This sequence belongs to the universal ribosomal protein uL1 family. In terms of assembly, part of the 50S ribosomal subunit.

Functionally, binds directly to 23S rRNA. The L1 stalk is quite mobile in the ribosome, and is involved in E site tRNA release. In terms of biological role, protein L1 is also a translational repressor protein, it controls the translation of the L11 operon by binding to its mRNA. The sequence is that of Large ribosomal subunit protein uL1 from Ralstonia pickettii (strain 12J).